A 348-amino-acid polypeptide reads, in one-letter code: Lipoyl synthase (348 aa).

A disordered region spans residues 1–45; it reads MSESAKPRITSGSKFRNEHGFSAIKDGVKRSSSNTEGKSLERKPK. [4Fe-4S] cluster-binding residues include C73, C78, C84, C99, C103, C106, and S314. One can recognise a Radical SAM core domain in the interval 85 to 303; the sequence is WTNGTATIMV…RDIGLEKGFM (219 aa).

The protein belongs to the radical SAM superfamily. Lipoyl synthase family. Requires [4Fe-4S] cluster as cofactor.

It localises to the cytoplasm. The enzyme catalyses [[Fe-S] cluster scaffold protein carrying a second [4Fe-4S](2+) cluster] + N(6)-octanoyl-L-lysyl-[protein] + 2 oxidized [2Fe-2S]-[ferredoxin] + 2 S-adenosyl-L-methionine + 4 H(+) = [[Fe-S] cluster scaffold protein] + N(6)-[(R)-dihydrolipoyl]-L-lysyl-[protein] + 4 Fe(3+) + 2 hydrogen sulfide + 2 5'-deoxyadenosine + 2 L-methionine + 2 reduced [2Fe-2S]-[ferredoxin]. It participates in protein modification; protein lipoylation via endogenous pathway; protein N(6)-(lipoyl)lysine from octanoyl-[acyl-carrier-protein]: step 2/2. Its function is as follows. Catalyzes the radical-mediated insertion of two sulfur atoms into the C-6 and C-8 positions of the octanoyl moiety bound to the lipoyl domains of lipoate-dependent enzymes, thereby converting the octanoylated domains into lipoylated derivatives. The chain is Lipoyl synthase from Marinobacter nauticus (strain ATCC 700491 / DSM 11845 / VT8) (Marinobacter aquaeolei).